A 159-amino-acid chain; its full sequence is Betainyl-CoA thioesterase (159 aa).

It belongs to the betainyl-CoA thioesterase family.

It carries out the reaction N,N,N-trimethylglycyl-CoA + H2O = glycine betaine + CoA + H(+). It participates in amine and polyamine metabolism; carnitine metabolism. Its function is as follows. Catalyzes the cleavage of betainyl-CoA (N,N,N-trimethylglycyl-CoA) into glycine betaine and coenzyme A. Is involved in a L-carnitine degradation pathway that allows P.aeruginosa to grow on L-carnitine as the sole source of carbon and nitrogen. The protein is Betainyl-CoA thioesterase of Pseudomonas aeruginosa (strain ATCC 15692 / DSM 22644 / CIP 104116 / JCM 14847 / LMG 12228 / 1C / PRS 101 / PAO1).